The chain runs to 465 residues: Cysteine--tRNA ligase (465 aa).

A Zn(2+)-binding site is contributed by Cys27. The 'HIGH' region motif lies at 29–39; that stretch reads PTVYDDAHLGH. Residues Cys207, His237, and Glu241 each coordinate Zn(2+). The 'KMSKS' region motif lies at 269 to 273; the sequence is KMSKS. Residue Lys272 participates in ATP binding.

It belongs to the class-I aminoacyl-tRNA synthetase family. Monomer. Requires Zn(2+) as cofactor.

It is found in the cytoplasm. The catalysed reaction is tRNA(Cys) + L-cysteine + ATP = L-cysteinyl-tRNA(Cys) + AMP + diphosphate. This is Cysteine--tRNA ligase from Helicobacter acinonychis (strain Sheeba).